Reading from the N-terminus, the 136-residue chain is Protein PsiE (136 aa).

4 helical membrane-spanning segments follow: residues 15–35, 55–75, 82–102, and 108–128; these read ILQN…VLFL, YELV…ALIV, FHFP…RLII, and PMDV…LWLC.

This sequence belongs to the PsiE family.

The protein localises to the cell inner membrane. This is Protein PsiE from Salmonella arizonae (strain ATCC BAA-731 / CDC346-86 / RSK2980).